A 101-amino-acid chain; its full sequence is opdI (101 aa).

A helical transmembrane segment spans residues 30 to 49 (GGMGGALKIVFLGMMTYFIA). Residues 56-101 (SQHPPTDFNAPVQSVPQRAQRPSDTRLQGPVLLASNHPSGDSASPE) form a disordered region. Composition is skewed to polar residues over residues 66-81 (PVQS…SDTR) and 91-101 (NHPSGDSASPE).

The protein localises to the membrane. Functionally, part of the gene cluster that mediates the biosynthesis of oxopyrrolidines, polyketide-amino acid hybrid compounds with feature structures of tetramic acid. Does not seem to play a role in oxopyrrolidines A and B biosynthesis. The sequence is that of opdI from Penicillium oxalicum (strain 114-2 / CGMCC 5302) (Penicillium decumbens).